The primary structure comprises 130 residues: Small ribosomal subunit protein uS8 (130 aa).

The protein belongs to the universal ribosomal protein uS8 family. As to quaternary structure, part of the 30S ribosomal subunit. Contacts proteins S5 and S12.

Its function is as follows. One of the primary rRNA binding proteins, it binds directly to 16S rRNA central domain where it helps coordinate assembly of the platform of the 30S subunit. This chain is Small ribosomal subunit protein uS8, found in Phytoplasma australiense.